Consider the following 156-residue polypeptide: 3-dehydroquinate dehydratase 1 (156 aa).

Y32 acts as the Proton acceptor in catalysis. N84, H90, and D97 together coordinate substrate. The active-site Proton donor is the H110. Substrate is bound by residues 111 to 112 (LS) and R121.

Belongs to the type-II 3-dehydroquinase family. As to quaternary structure, homododecamer.

It catalyses the reaction 3-dehydroquinate = 3-dehydroshikimate + H2O. It functions in the pathway metabolic intermediate biosynthesis; chorismate biosynthesis; chorismate from D-erythrose 4-phosphate and phosphoenolpyruvate: step 3/7. Functionally, catalyzes a trans-dehydration via an enolate intermediate. The sequence is that of 3-dehydroquinate dehydratase 1 (aroQ1) from Ralstonia nicotianae (strain ATCC BAA-1114 / GMI1000) (Ralstonia solanacearum).